A 935-amino-acid polypeptide reads, in one-letter code: Lon protease homolog 2, peroxisomal (935 aa).

Residues 12 to 296 enclose the Lon N-terminal domain; the sequence is LPVHRLERNL…NLRRLVEEMG (285 aa). 452–459 contacts ATP; the sequence is GPPGVGKT. The region spanning 692–922 is the Lon proteolytic domain; sequence QKGYGVVNGL…SDVLASVWEG (231 aa). Active-site residues include Ser-789 and Lys-832. The Microbody targeting signal motif lies at 933-935; that stretch reads ARI.

This sequence belongs to the peptidase S16 family.

Its subcellular location is the peroxisome matrix. The enzyme catalyses Hydrolysis of proteins in presence of ATP.. Functionally, ATP-dependent serine protease that mediates the selective degradation of misfolded and unassembled polypeptides in the peroxisomal matrix. Necessary for type 2 peroxisome targeting signal (PTS2)-containing protein processing and facilitates peroxisome matrix protein import. In Pichia angusta (Yeast), this protein is Lon protease homolog 2, peroxisomal (PLN).